A 262-amino-acid polypeptide reads, in one-letter code: Small ribosomal subunit protein eS4 (262 aa).

An S4 RNA-binding domain is found at L42 to V105.

The protein belongs to the eukaryotic ribosomal protein eS4 family.

This Ixodes scapularis (Black-legged tick) protein is Small ribosomal subunit protein eS4 (RpS4).